Here is a 119-residue protein sequence, read N- to C-terminus: Putative ankyrin repeat domain-containing protein 26-like 1 (119 aa).

Residues 15 to 112 (EKEEDLLHKN…EKQSRQRLTK (98 aa)) are a coiled coil.

In Homo sapiens (Human), this protein is Putative ankyrin repeat domain-containing protein 26-like 1 (ANKRD36BP1).